A 390-amino-acid chain; its full sequence is Protein phosphatase methylesterase 1 (390 aa).

The interval 19–50 (FGLSSLSEDPDESESNSNYFSPTPQPPNELRT) is disordered. Positions 100 to 332 (PIFICHHGAG…NLIIGQMQGK (233 aa)) constitute an AB hydrolase-1 domain. Active-site residues include Ser186, Asp213, and His346.

It belongs to the AB hydrolase superfamily.

It carries out the reaction [phosphatase 2A protein]-C-terminal L-leucine methyl ester + H2O = [phosphatase 2A protein]-C-terminal L-leucine + methanol + H(+). Functionally, demethylates proteins that have been reversibly carboxymethylated. Demethylates the phosphatase PP2A catalytic subunit. The sequence is that of Protein phosphatase methylesterase 1 (PPE1) from Debaryomyces hansenii (strain ATCC 36239 / CBS 767 / BCRC 21394 / JCM 1990 / NBRC 0083 / IGC 2968) (Yeast).